Consider the following 375-residue polypeptide: Alcohol dehydrogenase 1 (375 aa).

S2 is subject to N-acetylserine. C47, H68, C98, C101, C104, C112, and C175 together coordinate Zn(2+). Residues 200–205 (GLGGVG), D224, K229, 293–295 (LGV), and R370 contribute to the NAD(+) site.

This sequence belongs to the zinc-containing alcohol dehydrogenase family. Class-I subfamily. In terms of assembly, homodimer. Zn(2+) serves as cofactor.

It localises to the cytoplasm. It catalyses the reaction a primary alcohol + NAD(+) = an aldehyde + NADH + H(+). The enzyme catalyses a secondary alcohol + NAD(+) = a ketone + NADH + H(+). The protein is Alcohol dehydrogenase 1 (ADH1) of Apteryx australis (Southern brown kiwi).